The sequence spans 337 residues: Ribonucleoside-diphosphate reductase small chain (337 aa).

Fe cation-binding residues include Asp85, Glu116, and His119. Tyr123 is a catalytic residue. Residues Glu178, Glu212, and His215 each coordinate Fe cation.

This sequence belongs to the ribonucleoside diphosphate reductase small chain family. Heterodimer of a large and a small subunit. Requires Fe cation as cofactor.

The catalysed reaction is a 2'-deoxyribonucleoside 5'-diphosphate + [thioredoxin]-disulfide + H2O = a ribonucleoside 5'-diphosphate + [thioredoxin]-dithiol. Provides the precursors necessary for DNA synthesis. Catalyzes the biosynthesis of deoxyribonucleotides from the corresponding ribonucleotides. The sequence is that of Ribonucleoside-diphosphate reductase small chain (RNR2) from Trypanosoma brucei brucei.